A 606-amino-acid chain; its full sequence is Elongation factor 4 (606 aa).

The tr-type G domain maps to 7-189 (SRIRNFCIIA…AVVDRVPPPK (183 aa)). Residues 19–24 (DHGKST) and 136–139 (NKID) each bind GTP.

It belongs to the TRAFAC class translation factor GTPase superfamily. Classic translation factor GTPase family. LepA subfamily.

It is found in the cell inner membrane. The enzyme catalyses GTP + H2O = GDP + phosphate + H(+). In terms of biological role, required for accurate and efficient protein synthesis under certain stress conditions. May act as a fidelity factor of the translation reaction, by catalyzing a one-codon backward translocation of tRNAs on improperly translocated ribosomes. Back-translocation proceeds from a post-translocation (POST) complex to a pre-translocation (PRE) complex, thus giving elongation factor G a second chance to translocate the tRNAs correctly. Binds to ribosomes in a GTP-dependent manner. This is Elongation factor 4 from Parasynechococcus marenigrum (strain WH8102).